The primary structure comprises 272 residues: Glutamate racemase (272 aa).

Substrate is bound by residues 12-13 (DS) and 44-45 (YG). Catalysis depends on Cys-75, which acts as the Proton donor/acceptor. 76–77 (NT) lines the substrate pocket. Residue Cys-185 is the Proton donor/acceptor of the active site. 186–187 (TH) contacts substrate.

It belongs to the aspartate/glutamate racemases family.

It carries out the reaction L-glutamate = D-glutamate. The protein operates within cell wall biogenesis; peptidoglycan biosynthesis. Its function is as follows. Provides the (R)-glutamate required for cell wall biosynthesis. The polypeptide is Glutamate racemase (Mycobacterium leprae (strain TN)).